Here is a 506-residue protein sequence, read N- to C-terminus: Alpha-L-arabinofuranosidase B (506 aa).

An N-terminal signal peptide occupies residues 1 to 26; that stretch reads MSSGLSLERACAVALGIVASASLVAA. A catalytic region spans residues 27-343; that stretch reads GPCDIYSSGG…ADIVAAKYAI (317 aa). Disulfide bonds link cysteine 29-cysteine 39, cysteine 89-cysteine 94, and cysteine 184-cysteine 185. Residue asparagine 91 is glycosylated (N-linked (GlcNAc...) asparagine). Aspartate 227 lines the substrate pocket. The active-site Nucleophile is the glutamate 229. Substrate is bound by residues asparagine 230 and glycine 304. The Proton donor role is filled by aspartate 305. The interval 344 to 506 is ABD; sequence ASLTSGPALT…VSWVVSTGFA (163 aa). The cysteines at positions 409 and 447 are disulfide-linked. Histidine 424, asparagine 426, phenylalanine 427, aspartate 443, histidine 471, glutamate 473, leucine 476, and aspartate 496 together coordinate substrate.

It belongs to the glycosyl hydrolase 54 family.

The protein localises to the secreted. It catalyses the reaction Hydrolysis of terminal non-reducing alpha-L-arabinofuranoside residues in alpha-L-arabinosides.. It functions in the pathway glycan metabolism; L-arabinan degradation. In terms of biological role, alpha-L-arabinofuranosidase involved in the degradation of arabinoxylan, a major component of plant hemicellulose. Able to hydrolyze 1,5-, 1,3- and 1,2-alpha-linkages not only in L-arabinofuranosyl oligosaccharides, but also in polysaccharides containing terminal non-reducing L-arabinofuranoses in side chains, like L-arabinan, arabinogalactan and arabinoxylan. This chain is Alpha-L-arabinofuranosidase B (abfB), found in Aspergillus oryzae (strain ATCC 42149 / RIB 40) (Yellow koji mold).